The primary structure comprises 324 residues: Carbonic anhydrase 15 (324 aa).

An N-terminal signal peptide occupies residues 1–18 (MWALDFLLSFLLIQLAAQ). The 271-residue stretch at 23–293 (GTWCYDSQDP…LGGRRISASP (271 aa)) folds into the Alpha-carbonic anhydrase domain. Catalysis depends on histidine 90, which acts as the Proton acceptor. Residues histidine 122, histidine 124, and histidine 147 each contribute to the Zn(2+) site. Tyrosine 155 is a catalytic residue. Residues asparagine 184, asparagine 194, and asparagine 203 are each glycosylated (N-linked (GlcNAc...) asparagine). 231-232 (TT) provides a ligand contact to substrate. Positions 269–290 (LHPRPLTSNFRPQQPLGGRRIS) are disordered.

Belongs to the alpha-carbonic anhydrase family. It depends on Zn(2+) as a cofactor.

It localises to the secreted. It carries out the reaction hydrogencarbonate + H(+) = CO2 + H2O. Its activity is regulated as follows. Repressed by coumarins. Functionally, reversible hydration of carbon dioxide. The sequence is that of Carbonic anhydrase 15 (Ca15) from Mus musculus (Mouse).